The following is a 520-amino-acid chain: GMP synthase [glutamine-hydrolyzing] (520 aa).

One can recognise a Glutamine amidotransferase type-1 domain in the interval 9–202 (KILILDFGSQ…VRKICGCSGK (194 aa)). The active-site Nucleophile is C86. Catalysis depends on residues H176 and E178. Residues 203–395 (WTPGQIIEDA…LGLPHQMVWR (193 aa)) enclose the GMPS ATP-PPase domain. An ATP-binding site is contributed by 230–236 (SGGVDSS).

Homodimer.

The enzyme catalyses XMP + L-glutamine + ATP + H2O = GMP + L-glutamate + AMP + diphosphate + 2 H(+). The protein operates within purine metabolism; GMP biosynthesis; GMP from XMP (L-Gln route): step 1/1. In terms of biological role, catalyzes the synthesis of GMP from XMP. In Geotalea daltonii (strain DSM 22248 / JCM 15807 / FRC-32) (Geobacter daltonii), this protein is GMP synthase [glutamine-hydrolyzing].